We begin with the raw amino-acid sequence, 585 residues long: Arginine--tRNA ligase (585 aa).

The 'HIGH' region motif lies at 131–141 (ANPTGPMHVGH).

It belongs to the class-I aminoacyl-tRNA synthetase family. Monomer.

It localises to the cytoplasm. The enzyme catalyses tRNA(Arg) + L-arginine + ATP = L-arginyl-tRNA(Arg) + AMP + diphosphate. This Brucella ovis (strain ATCC 25840 / 63/290 / NCTC 10512) protein is Arginine--tRNA ligase.